A 255-amino-acid chain; its full sequence is Pimeloyl-[acyl-carrier protein] methyl ester esterase (255 aa).

Positions 16–241 (LVLVHGWGMN…QSSHAPFMTE (226 aa)) constitute an AB hydrolase-1 domain. Residues tryptophan 22, 82-83 (SL), and 143-147 (FMALQ) contribute to the substrate site. Serine 82 serves as the catalytic Nucleophile. Catalysis depends on residues aspartate 207 and histidine 235. Residue histidine 235 coordinates substrate.

The protein belongs to the AB hydrolase superfamily. Carboxylesterase BioH family. In terms of assembly, monomer.

Its subcellular location is the cytoplasm. The catalysed reaction is 6-carboxyhexanoyl-[ACP] methyl ester + H2O = 6-carboxyhexanoyl-[ACP] + methanol + H(+). The protein operates within cofactor biosynthesis; biotin biosynthesis. Its function is as follows. The physiological role of BioH is to remove the methyl group introduced by BioC when the pimeloyl moiety is complete. It allows to synthesize pimeloyl-ACP via the fatty acid synthetic pathway through the hydrolysis of the ester bonds of pimeloyl-ACP esters. The polypeptide is Pimeloyl-[acyl-carrier protein] methyl ester esterase (Vibrio cholerae serotype O1 (strain ATCC 39315 / El Tor Inaba N16961)).